Reading from the N-terminus, the 191-residue chain is Cdc42 homolog (191 aa).

Position 10–17 (10–17 (GDGAVGKT)) interacts with GTP. The Effector region signature appears at 32 to 40 (YVPTVFDNY). GTP-binding positions include 57-61 (DTAGQ) and 115-118 (TQID). Cys-188 is subject to Cysteine methyl ester. A lipid anchor (S-geranylgeranyl cysteine) is attached at Cys-188. Positions 189–191 (KFL) are cleaved as a propeptide — removed in mature form.

It belongs to the small GTPase superfamily. Rho family. CDC42 subfamily.

Its subcellular location is the cell junction. The protein resides in the adherens junction. It is found in the cell membrane. It catalyses the reaction GTP + H2O = GDP + phosphate + H(+). Regulates mbt kinase activity and is also required to recruit mbt to adherens junctions. Together with mbt, regulates photoreceptor cell morphogenesis. The protein is Cdc42 homolog of Drosophila pseudoobscura pseudoobscura (Fruit fly).